The sequence spans 481 residues: O-phosphoseryl-tRNA(Sec) selenium transferase (481 aa).

Positions 1–36 (MKANFGKKEGEYSRLVSKSSNKLLNSLWEKKQIPEE) are tetramerization. Arg69 is a pyridoxal 5'-phosphate binding site. A phosphate loop (P-loop) region spans residues 90–100 (GRSGNLLEIQP). Substrate is bound by residues Arg91, Ser92, and Gln99. Lys277 is subject to N6-(pyridoxal phosphate)lysine. Arg306 lines the substrate pocket.

Belongs to the SepSecS family. In terms of assembly, homotetramer formed by a catalytic dimer and a non-catalytic dimer serving as a binding platform that orients tRNASec for catalysis. Each tetramer binds the CCA ends of two tRNAs which point to the active sites of the catalytic dimer. It depends on pyridoxal 5'-phosphate as a cofactor.

The protein resides in the cytoplasm. The enzyme catalyses O-phospho-L-seryl-tRNA(Sec) + selenophosphate + H2O = L-selenocysteinyl-tRNA(Sec) + 2 phosphate. It functions in the pathway aminoacyl-tRNA biosynthesis; selenocysteinyl-tRNA(Sec) biosynthesis; selenocysteinyl-tRNA(Sec) from L-seryl-tRNA(Sec) (archaeal/eukaryal route): step 2/2. Converts O-phosphoseryl-tRNA(Sec) to selenocysteinyl-tRNA(Sec) required for selenoprotein biosynthesis. The protein is O-phosphoseryl-tRNA(Sec) selenium transferase (secs-1) of Caenorhabditis elegans.